The primary structure comprises 688 residues: Methionine--tRNA ligase (688 aa).

A 'HIGH' region motif is present at residues 13–23 (PYANGQIHIGH). Residues Cys-144, Cys-147, Cys-157, and Cys-160 each coordinate Zn(2+). Residues 335 to 339 (KMSKS) carry the 'KMSKS' region motif. Lys-338 contacts ATP. In terms of domain architecture, tRNA-binding spans 582–688 (DFAKIDLRVA…SGAVPGMRIG (107 aa)).

Belongs to the class-I aminoacyl-tRNA synthetase family. MetG type 1 subfamily. As to quaternary structure, homodimer. Requires Zn(2+) as cofactor.

Its subcellular location is the cytoplasm. It catalyses the reaction tRNA(Met) + L-methionine + ATP = L-methionyl-tRNA(Met) + AMP + diphosphate. Functionally, is required not only for elongation of protein synthesis but also for the initiation of all mRNA translation through initiator tRNA(fMet) aminoacylation. The protein is Methionine--tRNA ligase of Cupriavidus pinatubonensis (strain JMP 134 / LMG 1197) (Cupriavidus necator (strain JMP 134)).